Consider the following 637-residue polypeptide: Chaperone protein HtpG (637 aa).

An a; substrate-binding region spans residues 1–338 (MMELKMHNVK…SPDLPLNISR (338 aa)). The b stretch occupies residues 339–558 (ETLQNNRVVE…EGAMDLRMER (220 aa)). Residues 493-512 (KFSPEEKDKENKSDEERAEG) form a disordered region. The interval 559-637 (FLREQNQLNY…LNNLLGKVII (79 aa)) is c.

Belongs to the heat shock protein 90 family. Homodimer.

Its subcellular location is the cytoplasm. Functionally, molecular chaperone. Has ATPase activity. In Wolbachia sp. subsp. Brugia malayi (strain TRS), this protein is Chaperone protein HtpG.